The primary structure comprises 620 residues: 1-deoxy-D-xylulose-5-phosphate synthase (620 aa).

Residues H80 and 121–123 (GHS) contribute to the thiamine diphosphate site. D152 lines the Mg(2+) pocket. Thiamine diphosphate contacts are provided by residues 153–154 (GA), N181, Y288, and E370. Residue N181 coordinates Mg(2+).

It belongs to the transketolase family. DXPS subfamily. As to quaternary structure, homodimer. Mg(2+) serves as cofactor. Thiamine diphosphate is required as a cofactor.

The enzyme catalyses D-glyceraldehyde 3-phosphate + pyruvate + H(+) = 1-deoxy-D-xylulose 5-phosphate + CO2. It functions in the pathway metabolic intermediate biosynthesis; 1-deoxy-D-xylulose 5-phosphate biosynthesis; 1-deoxy-D-xylulose 5-phosphate from D-glyceraldehyde 3-phosphate and pyruvate: step 1/1. Its function is as follows. Catalyzes the acyloin condensation reaction between C atoms 2 and 3 of pyruvate and glyceraldehyde 3-phosphate to yield 1-deoxy-D-xylulose-5-phosphate (DXP). The polypeptide is 1-deoxy-D-xylulose-5-phosphate synthase (Shigella dysenteriae serotype 1 (strain Sd197)).